Here is a 171-residue protein sequence, read N- to C-terminus: Peptide deformylase (171 aa).

The Fe cation site is built by Cys-91 and His-133. The active site involves Glu-134. His-137 is a binding site for Fe cation.

Belongs to the polypeptide deformylase family. Fe(2+) serves as cofactor.

It carries out the reaction N-terminal N-formyl-L-methionyl-[peptide] + H2O = N-terminal L-methionyl-[peptide] + formate. Removes the formyl group from the N-terminal Met of newly synthesized proteins. Requires at least a dipeptide for an efficient rate of reaction. N-terminal L-methionine is a prerequisite for activity but the enzyme has broad specificity at other positions. This is Peptide deformylase from Cronobacter sakazakii (strain ATCC BAA-894) (Enterobacter sakazakii).